The sequence spans 180 residues: MASMISSSAVTTVSRASRGQSAAVAPFGGLKSMTGFPVKKVNTDITSITSNGGRVKCMQVWPPIGKKKFETLSYLPPLTRDQLLKEVEYLLRKGWVPCLEFELEKGFVYREHNKSPGYYDGRYWTMWKLPMFGTTDASQVLKELDEVVAAYPQAFVRIIGFDNVRQVQCISFIAHTPESY.

The N-terminal 56 residues, 1–56 (MASMISSSAVTTVSRASRGQSAAVAPFGGLKSMTGFPVKKVNTDITSITSNGGRVK), are a transit peptide targeting the chloroplast.

Belongs to the RuBisCO small chain family. Heterohexadecamer of 8 large and 8 small subunits.

The protein localises to the plastid. It localises to the chloroplast. Functionally, ruBisCO catalyzes two reactions: the carboxylation of D-ribulose 1,5-bisphosphate, the primary event in carbon dioxide fixation, as well as the oxidative fragmentation of the pentose substrate. Both reactions occur simultaneously and in competition at the same active site. Although the small subunit is not catalytic it is essential for maximal activity. The sequence is that of Ribulose bisphosphate carboxylase small subunit, chloroplastic 2 from Pisum sativum (Garden pea).